A 222-amino-acid polypeptide reads, in one-letter code: Large ribosomal subunit protein uL4 (222 aa).

The interval 42–100 is disordered; it reads AAGRQGTHSTKTRGEVRGGGKKPYRQKGTGRARQGSVRAPQFTGGGTVHGPKPRDYAQR. Residues 60-71 are compositionally biased toward basic residues; that stretch reads GGKKPYRQKGTG.

This sequence belongs to the universal ribosomal protein uL4 family. In terms of assembly, part of the 50S ribosomal subunit.

One of the primary rRNA binding proteins, this protein initially binds near the 5'-end of the 23S rRNA. It is important during the early stages of 50S assembly. It makes multiple contacts with different domains of the 23S rRNA in the assembled 50S subunit and ribosome. Its function is as follows. Forms part of the polypeptide exit tunnel. This is Large ribosomal subunit protein uL4 from Thermobifida fusca (strain YX).